The chain runs to 845 residues: Matrin-3 (845 aa).

Ser-2 is subject to N-acetylserine. Lys-3 bears the N6-acetyllysine; alternate mark. A Glycyl lysine isopeptide (Lys-Gly) (interchain with G-Cter in SUMO2); alternate cross-link involves residue Lys-3. 7 positions are modified to phosphoserine: Ser-4, Ser-9, Ser-14, Ser-22, Ser-41, Ser-118, and Ser-126. Residues Lys-132 and Lys-146 each participate in a glycyl lysine isopeptide (Lys-Gly) (interchain with G-Cter in SUMO2) cross-link. 2 disordered regions span residues 147–174 (RRRT…YRVP) and 187–213 (DSFD…ESGY). Position 150 is a phosphothreonine (Thr-150). A Phosphoserine modification is found at Ser-157. Tyr-158 is subject to Phosphotyrosine. Residues 160 to 174 (RDGRSATREPPYRVP) show a composition bias toward basic and acidic residues. A phosphoserine mark is found at Ser-164, Ser-188, and Ser-195. Residues 201-213 (DYDHGSRSQESGY) are compositionally biased toward basic and acidic residues. Tyr-202 carries the phosphotyrosine modification. Phosphoserine is present on residues Ser-206, Ser-208, and Ser-211. Tyr-219 is modified (phosphotyrosine). Ser-234 is modified (phosphoserine). Lys-245 participates in a covalent cross-link: Glycyl lysine isopeptide (Lys-Gly) (interchain with G-Cter in SUMO2). Ser-264 is modified (phosphoserine). Residue Lys-269 forms a Glycyl lysine isopeptide (Lys-Gly) (interchain with G-Cter in SUMO2) linkage. Residue Ser-275 is modified to Phosphoserine. Residues 342-394 (PFMLQQSTNPAPGILGPPPPSFHLGGPAVGPRGNLGAGNGNLQGPRHMQKGRV) are disordered. Residues 398 to 473 (RVVHIMDFQR…KPVRVHLSQK (76 aa)) form the RRM 1 domain. Residues Lys-478, Lys-487, and Lys-491 each participate in a glycyl lysine isopeptide (Lys-Gly) (interchain with G-Cter in SUMO2) cross-link. One can recognise an RRM 2 domain in the interval 496 to 571 (RVIHLSNLPH…RCVKVDLSEK (76 aa)). Ser-509 and Ser-511 each carry phosphoserine. Lys-515 participates in a covalent cross-link: Glycyl lysine isopeptide (Lys-Gly) (interchain with G-Cter in SUMO2). Lys-522 bears the N6-acetyllysine; alternate mark. Residue Lys-522 forms a Glycyl lysine isopeptide (Lys-Gly) (interchain with G-Cter in SUMO2); alternate linkage. Ser-533 carries the post-translational modification Phosphoserine. Glycyl lysine isopeptide (Lys-Gly) (interchain with G-Cter in SUMO2) cross-links involve residues Lys-554 and Lys-555. Lys-571 is subject to N6-acetyllysine. Residues 588 to 785 (KKDKSRKRSY…EYRIGPYQPN (198 aa)) form a disordered region. Phosphoserine occurs at positions 596, 598, 604, and 606. Positions 600-643 (DGKESPSDKKSKTDGAQKTENPAEGKEQEEKSGEDGEKDTKDDQ) are enriched in basic and acidic residues. Glycyl lysine isopeptide (Lys-Gly) (interchain with G-Cter in SUMO2) cross-links involve residues Lys-617 and Lys-630. Residues 653-665 (ESEDELLVDEEEA) show a composition bias toward acidic residues. Ser-654, Ser-671, Ser-673, and Ser-674 each carry phosphoserine. Thr-679 bears the Phosphothreonine mark. Residue Ser-689 is modified to Phosphoserine. A compositionally biased stretch (basic and acidic residues) spans 689–704 (SDGKKEPSDKAVKKDA). A Nuclear localization signal motif is present at residues 708-716 (SKKKLKKVD). Residues Lys-717 and Lys-734 each participate in a glycyl lysine isopeptide (Lys-Gly) (interchain with G-Cter in SUMO2) cross-link. Position 739 is a phosphothreonine (Thr-739). Residues Ser-745, Ser-757, and Ser-760 each carry the phosphoserine modification. The span at 765-778 (DENKEDYTIPDEYR) shows a compositional bias: basic and acidic residues. Residue Lys-768 forms a Glycyl lysine isopeptide (Lys-Gly) (interchain with G-Cter in SUMO2) linkage. The Matrin-type zinc-finger motif lies at 799–830 (FYCKLCSLFYTNEEVAKNTHCSSLPHYQKLKK). Lys-834 is modified (N6-acetyllysine; alternate). Lys-834 participates in a covalent cross-link: Glycyl lysine isopeptide (Lys-Gly) (interchain with G-Cter in SUMO2); alternate.

In terms of assembly, part of a complex consisting of SFPQ, NONO and MATR3. Interacts with AGO1 and AGO2. Part of a complex composed at least of ASH2L, EMSY, HCFC1, HSPA8, CCAR2, MATR3, MKI67, RBBP5, TUBB2A, WDR5 and ZNF335; this complex may have a histone H3-specific methyltransferase activity. Interacts with TARDBP. Part of the HDP-RNP complex composed of at least HEXIM1, PRKDC, XRCC5, XRCC6, paraspeckle proteins (SFPQ, NONO, PSPC1, RBM14, and MATR3) and NEAT1 RNA. Interacts with FUS. Interacts with IGF2BP1. Interacts with IGF2BP2 and IGF2BP3. Interacts with RBPMS.

The protein localises to the nucleus matrix. In terms of biological role, may play a role in transcription or may interact with other nuclear matrix proteins to form the internal fibrogranular network. In association with the SFPQ-NONO heteromer may play a role in nuclear retention of defective RNAs. Plays a role in the regulation of DNA virus-mediated innate immune response by assembling into the HDP-RNP complex, a complex that serves as a platform for IRF3 phosphorylation and subsequent innate immune response activation through the cGAS-STING pathway. Binds to N6-methyladenosine (m6A)-containing mRNAs and contributes to MYC stability by binding to m6A-containing MYC mRNAs. May bind to specific miRNA hairpins. This Rattus norvegicus (Rat) protein is Matrin-3 (Matr3).